We begin with the raw amino-acid sequence, 1444 residues long: Probable chitinase LysM18 (1444 aa).

2 LysM domains span residues 256 to 302 (STVQ…HFCC) and 321 to 369 (TTYT…IICL). Residues 382-450 (NAECGPQVPG…TNGCISNCGT (69 aa)) enclose the Chitin-binding type-1 domain. Intrachain disulfides connect cysteine 385–cysteine 413, cysteine 407–cysteine 419, cysteine 412–cysteine 426, and cysteine 444–cysteine 448. Residues 461–831 (YRKVGFYEGF…STSWTKFTSD (371 aa)) enclose the GH18 domain. The Proton donor role is filled by glutamate 582. 2 residues coordinate chitin: tyrosine 583 and tryptophan 808.

It belongs to the glycosyl hydrolase 18 family. Chitinase class V subfamily.

The enzyme catalyses Random endo-hydrolysis of N-acetyl-beta-D-glucosaminide (1-&gt;4)-beta-linkages in chitin and chitodextrins.. Its function is as follows. Probable chitinase involved in the degradation of chitin, a component of the cell walls of fungi and exoskeletal elements of some animals (including worms and arthropods). Might be involved in manipulation of host defenses for successful infection. This chain is Probable chitinase LysM18, found in Penicillium expansum (Blue mold rot fungus).